The primary structure comprises 205 residues: Variable small protein 11 (205 aa).

The first 18 residues, 1–18 (MRKRISAIIMTLFMVFMS), serve as a signal peptide directing secretion. C19 carries N-palmitoyl cysteine lipidation. C19 carries S-diacylglycerol cysteine lipidation.

Belongs to the variable small protein (Vsp) family.

Its subcellular location is the cell outer membrane. Its function is as follows. The Vlp and Vsp proteins are antigenically distinct proteins, only one vlp or vsp gene is transcriptionally active at any one time. Switching between these genes is a mechanism of host immune response evasion. The protein is Variable small protein 11 of Borrelia hermsii.